Here is a 129-residue protein sequence, read N- to C-terminus: Glycine cleavage system H protein (129 aa).

Positions 24–106 constitute a Lipoyl-binding domain; sequence SVVVGVTQHA…YGAGWIVEIE (83 aa). The residue at position 65 (K65) is an N6-lipoyllysine.

It belongs to the GcvH family. As to quaternary structure, the glycine cleavage system is composed of four proteins: P, T, L and H. It depends on (R)-lipoate as a cofactor.

The glycine cleavage system catalyzes the degradation of glycine. The H protein shuttles the methylamine group of glycine from the P protein to the T protein. This chain is Glycine cleavage system H protein, found in Myxococcus xanthus (strain DK1622).